A 356-amino-acid chain; its full sequence is UDP-N-acetylglucosamine--N-acetylmuramyl-(pentapeptide) pyrophosphoryl-undecaprenol N-acetylglucosamine transferase (356 aa).

UDP-N-acetyl-alpha-D-glucosamine-binding positions include 12 to 14 (TGG), asparagine 124, arginine 163, serine 188, isoleucine 242, 261 to 266 (ALTVCE), and glutamine 287.

It belongs to the glycosyltransferase 28 family. MurG subfamily.

The protein localises to the cell inner membrane. The catalysed reaction is di-trans,octa-cis-undecaprenyl diphospho-N-acetyl-alpha-D-muramoyl-L-alanyl-D-glutamyl-meso-2,6-diaminopimeloyl-D-alanyl-D-alanine + UDP-N-acetyl-alpha-D-glucosamine = di-trans,octa-cis-undecaprenyl diphospho-[N-acetyl-alpha-D-glucosaminyl-(1-&gt;4)]-N-acetyl-alpha-D-muramoyl-L-alanyl-D-glutamyl-meso-2,6-diaminopimeloyl-D-alanyl-D-alanine + UDP + H(+). It functions in the pathway cell wall biogenesis; peptidoglycan biosynthesis. Functionally, cell wall formation. Catalyzes the transfer of a GlcNAc subunit on undecaprenyl-pyrophosphoryl-MurNAc-pentapeptide (lipid intermediate I) to form undecaprenyl-pyrophosphoryl-MurNAc-(pentapeptide)GlcNAc (lipid intermediate II). This Stutzerimonas stutzeri (strain A1501) (Pseudomonas stutzeri) protein is UDP-N-acetylglucosamine--N-acetylmuramyl-(pentapeptide) pyrophosphoryl-undecaprenol N-acetylglucosamine transferase.